Here is a 500-residue protein sequence, read N- to C-terminus: Maturase K (500 aa).

The protein belongs to the intron maturase 2 family. MatK subfamily.

It localises to the plastid. Its subcellular location is the chloroplast. Its function is as follows. Usually encoded in the trnK tRNA gene intron. Probably assists in splicing its own and other chloroplast group II introns. The chain is Maturase K from Argentina anserina (Silverweed cinquefoil).